Here is a 114-residue protein sequence, read N- to C-terminus: Cyclin-dependent kinase 2-associated protein 1 (114 aa).

The disordered stretch occupies residues 18-57 (AGSVHSPSTSMATSSQYRQLLSDYGPPSLGYTQGTGNSQV). An interaction with CDK2AP2 region spans residues 19–24 (GSVHSP). Polar residues predominate over residues 20-36 (SVHSPSTSMATSSQYRQ). Position 45 is a phosphoserine; by IKKE (Ser45). Residues 47–57 (GYTQGTGNSQV) show a composition bias toward polar residues.

The protein belongs to the CDK2AP family. In terms of assembly, homodimer. Component of the nucleosome remodeling and deacetylase (NuRD) repressor complex, composed of core proteins MTA1, MTA2, MTA3, RBBP4, RBBP7, HDAC1, HDAC2, MBD2, MBD3, and peripherally associated proteins CDK2AP1, CDK2AP2, GATAD2A, GATAD2B, CHD3, CHD4 and CHD5. The exact stoichiometry of the NuRD complex is unknown, and some subunits such as MBD2 and MBD3, GATAD2A and GATAD2B, and CHD3, CHD4 and CHD5 define mutually exclusive NuRD complexes. Interacts with monomeric unphosphorylated CDK2. Interacts with CDK2AP2. Interacts with GATAD2A. Interacts with HDAC1. Interacts with HDAC2. Interacts with MBD2. Interacts with MBD3. Interacts with RBBP4. Interacts with RBBP7. In terms of processing, phosphorylated in vitro by IKBKE at Ser-45.

It localises to the nucleus. Its subcellular location is the chromosome. Inhibitor of cyclin-dependent kinase CDK2. Also acts as a component of the histone deacetylase NuRD complex which participates in the remodeling of chromatin. In Mus musculus (Mouse), this protein is Cyclin-dependent kinase 2-associated protein 1 (Cdk2ap1).